A 456-amino-acid chain; its full sequence is Maturase-like protein 1 (456 aa).

This sequence to group II intron maturases.

It is found in the plastid. Could be required for group III intron excision. The polypeptide is Maturase-like protein 1 (mat1) (Euglena longa (Euglenophycean alga)).